We begin with the raw amino-acid sequence, 470 residues long: Cupincin (470 aa).

Positions 1–34 (MAKKKTSSSMARSQLAALLISLCFLSLASNAVGW) are cleaved as a signal peptide. The segment covering 36–52 (RRGEREEEDERRRHGGE) has biased composition (basic and acidic residues). Disordered stretches follow at residues 36 to 59 (RRGEREEEDERRRHGGEGGRPYHL) and 240 to 261 (KSCSRGGGGGSGSEWEIKPSSL). 2 consecutive Cupin type-1 domains span residues 57-215 (YHLG…EELE) and 259-445 (SSLT…AREA). A glycan (N-linked (GlcNAc...) asparagine) is linked at N297. The interval 330–368 (PHVSGGGSSERREREREHGRRREEEQGEEEHGERGEKAR) is disordered. A compositionally biased stretch (basic and acidic residues) spans 338-367 (SERREREREHGRRREEEQGEEEHGERGEKA). Zn(2+) is bound by residues H347, E352, and H360.

It belongs to the 7S seed storage protein family. Homotrimer. Zn(2+) serves as cofactor.

Its subcellular location is the secreted. Its function is as follows. Seed storage protein. Globulin-like protein that acts as a zinc metalloprotease. Cleaves specifically between Leu-15 and Tyr-16 of insulin B chain, and Gln-1 and Leu-2 of neurotensin (NT) peptide in vitro. May play a role as an initiating endopeptidase in germinating seeds. This is Cupincin from Oryza sativa subsp. japonica (Rice).